A 471-amino-acid chain; its full sequence is Kynurenine 3-monooxygenase (471 aa).

FAD-binding positions include V19, 37–40, and A57; that span reads YESR. R85 and Y99 together coordinate L-kynurenine. FAD is bound by residues R111, L136, T172, D304, and 317–318; that span reads MN. N363 and Y398 together coordinate L-kynurenine. 2 helical membrane passes run 385-404 and 425-445; these read CLHT…VTFS and ALFF…TGPT.

Belongs to the aromatic-ring hydroxylase family. KMO subfamily. FAD is required as a cofactor.

The protein localises to the mitochondrion outer membrane. It carries out the reaction L-kynurenine + NADPH + O2 + H(+) = 3-hydroxy-L-kynurenine + NADP(+) + H2O. It functions in the pathway cofactor biosynthesis; NAD(+) biosynthesis; quinolinate from L-kynurenine: step 1/3. In terms of biological role, catalyzes the hydroxylation of L-kynurenine (L-Kyn) to form 3-hydroxy-L-kynurenine (L-3OHKyn). Required for synthesis of quinolinic acid, a neurotoxic NMDA receptor antagonist and potential endogenous inhibitor of NMDA receptor signaling in axonal targeting, synaptogenesis and apoptosis during brain development. Quinolinic acid may also affect NMDA receptor signaling in pancreatic beta cells, osteoblasts, myocardial cells, and the gastrointestinal tract. The polypeptide is Kynurenine 3-monooxygenase (Sus scrofa (Pig)).